Reading from the N-terminus, the 159-residue chain is Major strawberry allergen Fra a 1-C (159 aa).

The protein belongs to the BetVI family. As to quaternary structure, monomer.

In Fragaria ananassa (Strawberry), this protein is Major strawberry allergen Fra a 1-C.